The chain runs to 331 residues: Anthranilate phosphoribosyltransferase (331 aa).

5-phospho-alpha-D-ribose 1-diphosphate-binding positions include glycine 79, 82 to 83 (GD), threonine 87, 89 to 92 (NIST), 107 to 115 (KHGNYGATS), and alanine 119. Anthranilate is bound at residue glycine 79. Serine 91 provides a ligand contact to Mg(2+). Residue asparagine 110 coordinates anthranilate. Anthranilate is bound at residue arginine 165. The Mg(2+) site is built by aspartate 223 and glutamate 224.

Belongs to the anthranilate phosphoribosyltransferase family. In terms of assembly, homodimer. Mg(2+) is required as a cofactor.

It catalyses the reaction N-(5-phospho-beta-D-ribosyl)anthranilate + diphosphate = 5-phospho-alpha-D-ribose 1-diphosphate + anthranilate. It functions in the pathway amino-acid biosynthesis; L-tryptophan biosynthesis; L-tryptophan from chorismate: step 2/5. Functionally, catalyzes the transfer of the phosphoribosyl group of 5-phosphorylribose-1-pyrophosphate (PRPP) to anthranilate to yield N-(5'-phosphoribosyl)-anthranilate (PRA). This Phocaeicola vulgatus (strain ATCC 8482 / DSM 1447 / JCM 5826 / CCUG 4940 / NBRC 14291 / NCTC 11154) (Bacteroides vulgatus) protein is Anthranilate phosphoribosyltransferase.